Reading from the N-terminus, the 59-residue chain is Large ribosomal subunit protein uL30 (59 aa).

Belongs to the universal ribosomal protein uL30 family. In terms of assembly, part of the 50S ribosomal subunit.

The chain is Large ribosomal subunit protein uL30 from Brachyspira hyodysenteriae (strain ATCC 49526 / WA1).